Reading from the N-terminus, the 297-residue chain is Occlusion-derived virus envelope protein E27 (297 aa).

Belongs to the baculoviridae E27 family. In terms of assembly, interacts with host mus209/PCNA, cdc2 and cdk6.

The protein localises to the virion membrane. Functionally, acts as a cyclin-like protein and plays a role in the modulation of host cell cycle. May promote G2/S arrest by interacting with host mus209/PCNA, cdc2 and cdk6. The cell cycle arrest is characterized by an intact nuclear envelope, concomitant with sustained activity of host cdc2. However, viral DNA replication still occurs in the arrested cells. This chain is Occlusion-derived virus envelope protein E27, found in Orgyia pseudotsugata multicapsid polyhedrosis virus (OpMNPV).